The primary structure comprises 507 residues: MSMKFMAALAFLALQLIVMAAGEDQSAQIMLDSDTKQYHRSSRNLRKRVHHARHDVAIVFNVEHYGAVGDGKHDSTDAFEKTWNAACNKLSAVFLVPANKKFVVNNLVFYGPCQPHFSFKVDGTIAAYPDPAKWKNSKIWMHFARLTDFNLMGTGVIDGQGNRWWSDQCKTINGRTVCNDKGRPTAIKIDFSKSVTVKELTLTNSPEFHLVFGECDGVKIQGIKIKAPRDSPNTDGIDIFASKRFEIEKCTIGTGDDCVAVGTGSSNITIKDLTCGPGHGMSIGSLGKGNSRSEVSFVHLDGAKFIDTQNGLRIKTWQGGSGLASHITYENVEMINAENPILINQFYCTSAAACKNQRSAVKIQDVTFKNIHGTSATTAAIQLMCSDSVPCSNIKLSNVFLKLTSGKVATCVNKNANGYYTNPLNPSCKSLHPGRTPKELELHQKPTTLLMDEKMGASLNSSPPNCKNKCKGCQPCKPKLIIVHPNQPEDYYPQRWVCSCHNKIYNP.

A signal peptide spans 1–20; sequence MSMKFMAALAFLALQLIVMA. Positions 21 to 54 are excised as a propeptide; it reads AGEDQSAQIMLDSDTKQYHRSSRNLRKRVHHARH. 6 PbH1 repeats span residues 215–241, 242–263, 265–285, 295–316, 324–345, and 358–385; these read CDGVKIQGIKIKAPRDSPNTDGIDIFA, SKRFEIEKCTIGTGDDCVAVGT, SSNITIKDLTCGPGHGMSIGS, VSFVHLDGAKFIDTQNGLRIKT, ASHITYENVEMINAENPILINQ, and RSAVKIQDVTFKNIHGTSATTAAIQLMC. Asp256 functions as the Proton donor in the catalytic mechanism. N-linked (GlcNAc...) asparagine glycosylation is present at Asn267. Residue His279 is part of the active site.

Belongs to the glycosyl hydrolase 28 family.

The protein resides in the secreted. It is found in the cell wall. The catalysed reaction is (1,4-alpha-D-galacturonosyl)n+m + H2O = (1,4-alpha-D-galacturonosyl)n + (1,4-alpha-D-galacturonosyl)m.. The protein is Polygalacturonase (JNA2) of Juniperus ashei (Ozark white cedar).